Consider the following 299-residue polypeptide: Probable xyloglucan endotransglucosylase/hydrolase protein 10 (299 aa).

The first 29 residues, 1–29 (MTLINRSKPFVLLVGFSIISSLLLWVSQA), serve as a signal peptide directing secretion. In terms of domain architecture, GH16 spans 30 to 225 (SVVSSGDFNK…WSKGPFVASF (196 aa)). N-linked (GlcNAc...) asparagine glycosylation occurs at Asn-51. Catalysis depends on Glu-111, which acts as the Nucleophile. The active-site Proton donor is the Glu-115. Xyloglucan is bound by residues Glu-115, 128–130 (QTN), 138–140 (NRE), 204–205 (SW), and Gly-209. Intrachain disulfides connect Cys-233–Cys-242 and Cys-280–Cys-294. The N-linked (GlcNAc...) asparagine glycan is linked to Asn-238. Xyloglucan is bound at residue Arg-285.

Belongs to the glycosyl hydrolase 16 family. XTH group 1 subfamily. Post-translationally, contains at least one intrachain disulfide bond essential for its enzymatic activity.

The protein resides in the secreted. It is found in the cell wall. The protein localises to the extracellular space. Its subcellular location is the apoplast. It catalyses the reaction breaks a beta-(1-&gt;4) bond in the backbone of a xyloglucan and transfers the xyloglucanyl segment on to O-4 of the non-reducing terminal glucose residue of an acceptor, which can be a xyloglucan or an oligosaccharide of xyloglucan.. In terms of biological role, catalyzes xyloglucan endohydrolysis (XEH) and/or endotransglycosylation (XET). Cleaves and religates xyloglucan polymers, an essential constituent of the primary cell wall, and thereby participates in cell wall construction of growing tissues. In Arabidopsis thaliana (Mouse-ear cress), this protein is Probable xyloglucan endotransglucosylase/hydrolase protein 10 (XTH10).